The chain runs to 183 residues: Ribosome maturation factor RimM (183 aa).

In terms of domain architecture, PRC barrel spans 102 to 183 (DDDFYWHQLE…CITVDWDPEF (82 aa)).

It belongs to the RimM family. As to quaternary structure, binds ribosomal protein uS19.

It is found in the cytoplasm. In terms of biological role, an accessory protein needed during the final step in the assembly of 30S ribosomal subunit, possibly for assembly of the head region. Essential for efficient processing of 16S rRNA. May be needed both before and after RbfA during the maturation of 16S rRNA. It has affinity for free ribosomal 30S subunits but not for 70S ribosomes. The chain is Ribosome maturation factor RimM from Saccharophagus degradans (strain 2-40 / ATCC 43961 / DSM 17024).